The chain runs to 774 residues: Lysyl oxidase homolog 2 (774 aa).

The first 25 residues, 1-25 (MERRGSSCLCRCLALLALLPTLSLA), serve as a signal peptide directing secretion. 4 consecutive SRCR domains span residues 58-159 (LRLA…VVCS), 188-302 (IRAI…VSCV), 326-425 (VRLR…VRCN), and 435-544 (LRLN…VACS). 9 disulfide bridges follow: Cys-84/Cys-148, Cys-97/Cys-158, Cys-128/Cys-138, Cys-218/Cys-291, Cys-231/Cys-301, Cys-265/Cys-275, Cys-351/Cys-414, Cys-364/Cys-424, and Cys-395/Cys-405. An N-linked (GlcNAc...) asparagine glycan is attached at Asn-288. Asn-455 carries an N-linked (GlcNAc...) asparagine glycan. 3 disulfides stabilise this stretch: Cys-464-Cys-530, Cys-477-Cys-543, and Cys-511-Cys-521. Positions 548–751 (PDLVLNAEIV…WMYNCHIGGS (204 aa)) are lysyl-oxidase like. Residues Asp-549 and Leu-550 each coordinate Ca(2+). Intrachain disulfides connect Cys-573-Cys-625, Cys-579-Cys-695, Cys-657-Cys-673, and Cys-663-Cys-685. Cu cation is bound by residues His-626, His-628, and His-630. Asn-644 carries an N-linked (GlcNAc...) asparagine glycan. The lysine tyrosylquinone (Lys-Tyr) cross-link spans 653–689 (KASFCLEDTECEGDIQKSYECANFGEQGITMGCWDMY). Tyr-689 is modified (2',4',5'-topaquinone). Residues Glu-722, Asp-724, Asn-727, and Asn-728 each coordinate Ca(2+). A disulfide bridge connects residues Cys-732 and Cys-746.

It belongs to the lysyl oxidase family. In terms of assembly, component of some chromatin repressor complex. Interacts with SNAI1. Interacts with TAF10. Interacts with HSPA5. Interacts with EFEMP2. The cofactor is Cu cation. Lysine tyrosylquinone residue is required as a cofactor. In terms of processing, the lysine tyrosylquinone cross-link (LTQ) is generated by condensation of the epsilon-amino group of a lysine with a topaquinone produced by oxidation of tyrosine. N-glycosylated. N-glycosylation on Asn-455 and Asn-644 may be essential for proper folding and secretion; may be composed of a fucosylated carbohydrates attached to a trimannose N-linked glycan core.

Its subcellular location is the secreted. The protein resides in the extracellular space. It is found in the extracellular matrix. The protein localises to the basement membrane. It localises to the nucleus. Its subcellular location is the chromosome. The protein resides in the endoplasmic reticulum. It catalyses the reaction L-lysyl-[protein] + O2 + H2O = (S)-2-amino-6-oxohexanoyl-[protein] + H2O2 + NH4(+). Its activity is regulated as follows. Specifically inhibited by a mouse monoclonal antibody AB0023, inhibition occurs in a non-competitive manner. Mediates the post-translational oxidative deamination of lysine residues on target proteins leading to the formation of deaminated lysine (allysine). Acts as a transcription corepressor and specifically mediates deamination of trimethylated 'Lys-4' of histone H3 (H3K4me3), a specific tag for epigenetic transcriptional activation. Shows no activity against histone H3 when it is trimethylated on 'Lys-9' (H3K9me3) or 'Lys-27' (H3K27me3) or when 'Lys-4' is monomethylated (H3K4me1) or dimethylated (H3K4me2). Also mediates deamination of methylated TAF10, a member of the transcription factor IID (TFIID) complex, which induces release of TAF10 from promoters, leading to inhibition of TFIID-dependent transcription. LOXL2-mediated deamination of TAF10 results in transcriptional repression of genes required for embryonic stem cell pluripotency including POU5F1/OCT4, NANOG, KLF4 and SOX2. Involved in epithelial to mesenchymal transition (EMT) via interaction with SNAI1 and participates in repression of E-cadherin CDH1, probably by mediating deamination of histone H3. During EMT, involved with SNAI1 in negatively regulating pericentromeric heterochromatin transcription. SNAI1 recruits LOXL2 to pericentromeric regions to oxidize histone H3 and repress transcription which leads to release of heterochromatin component CBX5/HP1A, enabling chromatin reorganization and acquisition of mesenchymal traits. Interacts with the endoplasmic reticulum protein HSPA5 which activates the IRE1-XBP1 pathway of the unfolded protein response, leading to expression of several transcription factors involved in EMT and subsequent EMT induction. When secreted into the extracellular matrix, promotes cross-linking of extracellular matrix proteins by mediating oxidative deamination of peptidyl lysine residues in precursors to fibrous collagen and elastin. Acts as a regulator of sprouting angiogenesis, probably via collagen IV scaffolding. Acts as a regulator of chondrocyte differentiation, probably by regulating expression of factors that control chondrocyte differentiation. The chain is Lysyl oxidase homolog 2 (LOXL2) from Bos taurus (Bovine).